The following is a 622-amino-acid chain: Serine/threonine-protein kinase MAK (622 aa).

Residues 4-284 enclose the Protein kinase domain; the sequence is YTTMKQLGDG…ASQALKHPYF (281 aa). Residues 10-18 and Lys33 contribute to the ATP site; that span reads LGDGTYGSV. Asp125 serves as the catalytic Proton acceptor. Thr157 is subject to Phosphothreonine; by autocatalysis. Tyr159 carries the post-translational modification Phosphotyrosine; by autocatalysis. The segment at 301–371 is disordered; the sequence is QTLHKQLQPL…QGHQKPPQTM (71 aa). Over residues 336–355 the composition is skewed to polar residues; sequence QPKQGHQPLQTIQPPQNTVT.

The protein belongs to the protein kinase superfamily. CMGC Ser/Thr protein kinase family. CDC2/CDKX subfamily. As to quaternary structure, interacts with AR and CDK20. Found in a complex containing MAK, AR and NCOA3. Interacts with FZR1 (via WD repeats). Interacts with RP1. Mg(2+) is required as a cofactor. Post-translationally, autophosphorylated. Phosphorylated on serine and threonine residues. As to expression, in pre- and postmeiotic male germ cells in testis. In photoreceptor cells of the retina and in the olfactory receptors, and in certain epithelia of the respiratory tract and choroid plexus (brain).

The protein resides in the nucleus. Its subcellular location is the cytoplasm. It localises to the cytoskeleton. The protein localises to the microtubule organizing center. It is found in the centrosome. The protein resides in the spindle. Its subcellular location is the midbody. It localises to the cell projection. The protein localises to the cilium. It is found in the photoreceptor outer segment. The protein resides in the photoreceptor inner segment. The catalysed reaction is L-seryl-[protein] + ATP = O-phospho-L-seryl-[protein] + ADP + H(+). The enzyme catalyses L-threonyl-[protein] + ATP = O-phospho-L-threonyl-[protein] + ADP + H(+). In terms of biological role, essential for the regulation of ciliary length and required for the long-term survival of photoreceptors. Could have an important function in sensory cells and in spermatogenesis. May participate in signaling pathways used in visual and olfactory sensory transduction. Phosphorylates FZR1 in a cell cycle-dependent manner. Plays a role in the transcriptional coactivation of AR. The sequence is that of Serine/threonine-protein kinase MAK (Mak) from Mus musculus (Mouse).